The following is a 739-amino-acid chain: UPF0313 protein YgiQ (739 aa).

One can recognise a Radical SAM core domain in the interval 372 to 650 (AYEMIRFSVN…KALLRYHDPA (279 aa)). [4Fe-4S] cluster contacts are provided by Cys386, Cys390, and Cys393. The segment at 686–739 (EARRQNRNTRPALTKHTPMATQCQTPATAKKASSTQSRPVNAGAKKRPKAAVGR) is disordered. Positions 704 to 724 (MATQCQTPATAKKASSTQSRP) are enriched in polar residues. Residues 729-739 (AKKRPKAAVGR) show a composition bias toward basic residues.

Belongs to the UPF0313 family. Requires [4Fe-4S] cluster as cofactor.

The sequence is that of UPF0313 protein YgiQ from Escherichia coli O157:H7.